The sequence spans 481 residues: Acyl-CoA ligase cnsG (481 aa).

The PTS2-type peroxisomal targeting signal motif lies at 3 to 11 (SPQLPPSMK). ATP contacts are provided by residues 124–132 (KSGTTGNPK), 263–268 (NGYGMT), Asp-353, and Arg-368. Thr-268 is a substrate binding site. Residues 376-378 (GGL) and 446-448 (AIF) each bind CoA. Residue Lys-466 coordinates ATP.

The protein belongs to the ATP-dependent AMP-binding enzyme family.

The protein operates within alkaloid biosynthesis. Functionally, acyl-CoA ligase; part of the gene cluster that mediates the biosynthesis of communesins, a prominent class of indole alkaloids with great potential as pharmaceuticals. Communesins are biosynthesized by the coupling of tryptamine and aurantioclavine, two building blocks derived from L-tryptophan. The L-tryptophan decarboxylase cnsB converts L-tryptophan to tryptamine, whereas the tryptophan dimethylallyltransferase cnsF converts L-tryptophan to 4-dimethylallyl tryptophan which is further transformed to aurantioclavine by the aurantioclavine synthase cnsA, probably aided by the catalase cnsD. The cytochrome P450 monooxygenase cnsC catalyzes the heterodimeric coupling between the two different indole moieties, tryptamine and aurantioclavine, to construct vicinal quaternary stereocenters and yield the heptacyclic communesin scaffold. The O-methyltransferase cnsE then methylates the communesin scaffold to produce communesin K, the simplest characterized communesin that contains the heptacyclic core. The dioxygenase cnsJ converts communesin K into communesin I. Acylation to introduce the hexadienyl group at position N16 of communesin I by the acyltransferase cnsK leads to the production of communesin B. The hexadienyl group is produced by the highly reducing polyketide synthase cnsI, before being hydrolytically removed from cnsI by the serine hydrolase cnsH, converted into hexadienyl-CoA by the CoA ligase cnsG, and then transferred to communesin I by cnsK. Surprisingly, cnsK may also be a promiscuous acyltransferase that can tolerate a range of acyl groups, including acetyl-, propionyl-, and butyryl-CoA, which lead to communesins A, G and H respectively. The roles of the alpha-ketoglutarate-dependent dioxygenases cnsM and cnsP have still to be determined. This chain is Acyl-CoA ligase cnsG, found in Penicillium expansum (Blue mold rot fungus).